Reading from the N-terminus, the 316-residue chain is MTGTQALRHHDNFLQVAKSYYQLTKPRIIPLLLITTAAAMEIASKGQVSPLLLFLTLLGGTLAAAAAQTLNCIYDRDIDHTMLRTRARPIPSGRVQPLHALIFALVLASLSLALFVFFVNTLSGFLAMTGIAFYMLIYTHLLKRHSIQNIVIGGAAGSIPPLVGWAAVTGDLGWIPWILFAIIFLWTPPHFWALALMIKDDYAEVDIPMMPVVKGEEATSEQIWLYTLIVVPFTFLLIYPLAACGVVYGVAALVLGFVFLKKAWRLKQNPFDRDIARSLFKYSILYMMLLCTAMVIDSLPMTSHLIATIASLFSCS.

9 helical membrane passes run 28 to 48 (IIPL…KGQV), 50 to 70 (PLLL…AQTL), 99 to 119 (HALI…VFFV), 122 to 142 (LSGF…THLL), 150 to 170 (IVIG…AVTG), 178 to 198 (ILFA…ALMI), 223 to 243 (IWLY…PLAA), 244 to 264 (CGVV…KKAW), and 293 to 313 (AMVI…ASLF).

This sequence belongs to the UbiA prenyltransferase family. Protoheme IX farnesyltransferase subfamily.

The protein resides in the cell inner membrane. The enzyme catalyses heme b + (2E,6E)-farnesyl diphosphate + H2O = Fe(II)-heme o + diphosphate. The protein operates within porphyrin-containing compound metabolism; heme O biosynthesis; heme O from protoheme: step 1/1. Functionally, converts heme B (protoheme IX) to heme O by substitution of the vinyl group on carbon 2 of heme B porphyrin ring with a hydroxyethyl farnesyl side group. The protein is Protoheme IX farnesyltransferase of Microcystis aeruginosa (strain NIES-843 / IAM M-2473).